Reading from the N-terminus, the 171-residue chain is Peptidyl-prolyl cis-trans isomerase slr1251 (171 aa).

The 164-residue stretch at Phe-6–Glu-169 folds into the PPIase cyclophilin-type domain.

This sequence belongs to the cyclophilin-type PPIase family.

It catalyses the reaction [protein]-peptidylproline (omega=180) = [protein]-peptidylproline (omega=0). PPIases accelerate the folding of proteins. It catalyzes the cis-trans isomerization of proline imidic peptide bonds in oligopeptides. In Synechocystis sp. (strain ATCC 27184 / PCC 6803 / Kazusa), this protein is Peptidyl-prolyl cis-trans isomerase slr1251.